The following is a 210-amino-acid chain: Large ribosomal subunit protein bL9 (210 aa).

The segment at Glu-172–Ala-210 is disordered. A compositionally biased stretch (acidic residues) spans Ala-199 to Ala-210.

The protein belongs to the bacterial ribosomal protein bL9 family.

Binds to the 23S rRNA. The polypeptide is Large ribosomal subunit protein bL9 (Sphingopyxis alaskensis (strain DSM 13593 / LMG 18877 / RB2256) (Sphingomonas alaskensis)).